The following is a 287-amino-acid chain: Mitochondrial glycine transporter B (287 aa).

Solcar repeat units lie at residues H7–H97, P104–A188, and I198–R282. The next 6 helical transmembrane spans lie at F13–Q38, G72–Y98, V110–E135, G163–K186, V202–M228, and G257–V275.

Belongs to the mitochondrial carrier (TC 2.A.29) family. SLC25A38 subfamily. As to expression, at 24 hours post-fertilization, expressed predominantly in posterior blood island, posterior cardinal vein and circulating blood. At 34 hours post-fertilization, becomes restricted to posterior blood island and circulating blood.

It is found in the mitochondrion inner membrane. It carries out the reaction glycine(in) = glycine(out). In terms of biological role, mitochondrial glycine transporter that imports glycine into the mitochondrial matrix. Plays an important role in providing glycine for the first enzymatic step in heme biosynthesis, the condensation of glycine with succinyl-CoA to produce 5-aminolevulinate (ALA) in the mitochondrial matrix. Required during erythropoiesis. Functionally, may play a role as pro-apoptotic protein that induces caspase-dependent apoptosis. This Danio rerio (Zebrafish) protein is Mitochondrial glycine transporter B (slc25a38b).